Consider the following 389-residue polypeptide: GDSL esterase/lipase At1g28570 (389 aa).

The first 25 residues, 1-25 (MATLFMKLVSFFLILSTFCLTTVNS), serve as a signal peptide directing secretion. Ser41 (nucleophile) is an active-site residue. Asn137 and Asn319 each carry an N-linked (GlcNAc...) asparagine glycan. Active-site residues include Asp344 and His347.

This sequence belongs to the 'GDSL' lipolytic enzyme family.

It localises to the secreted. The polypeptide is GDSL esterase/lipase At1g28570 (Arabidopsis thaliana (Mouse-ear cress)).